The following is a 209-amino-acid chain: Large ribosomal subunit protein uL3 (209 aa).

Residues 133 to 152 form a disordered region; the sequence is THGNSLSHRVPGSIGQNQTP. Position 150 is an N5-methylglutamine (Gln-150).

Belongs to the universal ribosomal protein uL3 family. As to quaternary structure, part of the 50S ribosomal subunit. Forms a cluster with proteins L14 and L19. Post-translationally, methylated by PrmB.

Its function is as follows. One of the primary rRNA binding proteins, it binds directly near the 3'-end of the 23S rRNA, where it nucleates assembly of the 50S subunit. This Sodalis glossinidius (strain morsitans) protein is Large ribosomal subunit protein uL3.